The sequence spans 222 residues: Countin-3 (222 aa).

A signal peptide spans 1 to 20; it reads MNKILSLFLITILLISKVMS. Positions 21–105 constitute a Saposin B-type domain; that stretch reads SSEECKLCTD…ESVKMCQYND (85 aa). 3 disulfides stabilise this stretch: cysteine 25–cysteine 101, cysteine 28–cysteine 95, and cysteine 56–cysteine 68. Residues asparagine 108, asparagine 134, and asparagine 218 are each glycosylated (N-linked (GlcNAc...) asparagine).

The protein belongs to the countin family.

Its subcellular location is the secreted. May control the size of the multicellular structure. This is Countin-3 (ctnC) from Dictyostelium discoideum (Social amoeba).